A 558-amino-acid chain; its full sequence is uncharacterized protein (558 aa).

Positions 7–206 (SNFIDMLRLG…FACFLEGMLS (200 aa)) constitute a DhaL domain.

This is an uncharacterized protein from Mycoplasma pneumoniae (strain ATCC 29342 / M129 / Subtype 1) (Mycoplasmoides pneumoniae).